A 329-amino-acid chain; its full sequence is Thioredoxin-like fold domain-containing protein MRL7L homolog, chloroplastic (329 aa).

A chloroplast-targeting transit peptide spans 1-46; that stretch reads MALQSCCSSSASVPATCSALCLAEATRAASLFVRPRAAARRLVLAR. Residues 58 to 91 form a disordered region; the sequence is AVQLVLGGRARDDGSESESSDDEDDDEPMQMTDE. The span at 72–85 shows a compositional bias: acidic residues; the sequence is SESESSDDEDDDEP.

It is found in the plastid. Its subcellular location is the chloroplast stroma. Its function is as follows. Plays an essential role in early steps of chloroplast development. Involved in the regulation of plastid gene expression. Required for the proper function of the plastid transcriptional machinery and protein accumulation in thylakoid membranes. May function as molecular chaperone to ensure proper organization of the nucleoids in chloroplasts. The chain is Thioredoxin-like fold domain-containing protein MRL7L homolog, chloroplastic from Oryza sativa subsp. japonica (Rice).